The following is a 307-amino-acid chain: Oxygen-dependent coproporphyrinogen-III oxidase (307 aa).

Ser99 is a binding site for substrate. A divalent metal cation contacts are provided by His103 and His113. His113 functions as the Proton donor in the catalytic mechanism. 115–117 (NVR) contacts substrate. A divalent metal cation is bound by residues His152 and His182. The interval 247 to 282 (YVEFNLVFDRGTLFGLQSGGRTESILMSMPPVANWR) is important for dimerization. 265-267 (GGR) provides a ligand contact to substrate.

Belongs to the aerobic coproporphyrinogen-III oxidase family. In terms of assembly, homodimer. It depends on a divalent metal cation as a cofactor.

It localises to the cytoplasm. It carries out the reaction coproporphyrinogen III + O2 + 2 H(+) = protoporphyrinogen IX + 2 CO2 + 2 H2O. The protein operates within porphyrin-containing compound metabolism; protoporphyrin-IX biosynthesis; protoporphyrinogen-IX from coproporphyrinogen-III (O2 route): step 1/1. In terms of biological role, involved in the heme biosynthesis. Catalyzes the aerobic oxidative decarboxylation of propionate groups of rings A and B of coproporphyrinogen-III to yield the vinyl groups in protoporphyrinogen-IX. This is Oxygen-dependent coproporphyrinogen-III oxidase from Burkholderia cenocepacia (strain ATCC BAA-245 / DSM 16553 / LMG 16656 / NCTC 13227 / J2315 / CF5610) (Burkholderia cepacia (strain J2315)).